We begin with the raw amino-acid sequence, 418 residues long: Sprouty-related, EVH1 domain-containing protein 2 (418 aa).

A WH1 domain is found at 5-122 (THPDDDSYIV…RGVRKAIEDL (118 aa)). Positions 127–172 (TTSSSTIHNEAELGDDDVFTTATDSSSNSSQKREQPTRTVSSPTSC) are disordered. Positions 146-156 (TTATDSSSNSS) are enriched in polar residues. The KBD domain maps to 201–257 (PYRQVSFPDDDEEIVRINPREKIWMTGYEDYRHAPVRGKYPDPSEDVDSSYVRFAKG). At Ser-206 the chain carries Phosphoserine. Phosphotyrosine occurs at positions 228 and 231. Positions 275 to 302 (GLGEDPKGRGGSVIKTQPSRGKSRRRKE) are disordered. The 109-residue stretch at 308–416 (RCVYCRDMFN…CRCCGGKHKA (109 aa)) folds into the SPR domain.

In terms of assembly, homodimer and heterodimer. Able to interact with SPRED1 to form heterodimers. Interacts with RAS. May interact with ZDHHC13 (via ANK repeats) and ZDHHC17 (via ANK repeats). Interacts with TESK1. Interacts with NF1. In terms of processing, phosphorylated on serine and threonine residues. Phosphorylated on tyrosine. Phosphorylation of Tyr-228 and Tyr-231 are required for ubiquitination. Ubiquitinated; leading to degradation by the proteasome.

The protein localises to the cell membrane. The protein resides in the cytoplasmic vesicle. It is found in the secretory vesicle membrane. It localises to the cytoplasm. In terms of biological role, negatively regulates Ras signaling pathways and downstream activation of MAP kinases. Recruits and translocates NF1 to the cell membrane, thereby enabling NF1-dependent hydrolysis of active GTP-bound Ras to inactive GDP-bound Ras. Inhibits fibroblast growth factor (FGF)-induced retinal lens fiber differentiation, probably by inhibiting FGF-mediated phosphorylation of ERK1/2. Inhibits TGFB-induced epithelial-to-mesenchymal transition in lens epithelial cells. This chain is Sprouty-related, EVH1 domain-containing protein 2 (SPRED2), found in Pongo abelii (Sumatran orangutan).